The sequence spans 239 residues: Probable transcriptional regulatory protein BLi00754/BL02339 (239 aa).

This sequence belongs to the TACO1 family. YeeN subfamily.

Its subcellular location is the cytoplasm. The sequence is that of Probable transcriptional regulatory protein BLi00754/BL02339 from Bacillus licheniformis (strain ATCC 14580 / DSM 13 / JCM 2505 / CCUG 7422 / NBRC 12200 / NCIMB 9375 / NCTC 10341 / NRRL NRS-1264 / Gibson 46).